The primary structure comprises 439 residues: Tubulin beta chain (439 aa).

Positions 11, 69, 138, 142, 143, 144, 204, and 226 each coordinate GTP. Glu69 provides a ligand contact to Mg(2+).

The protein belongs to the tubulin family. In terms of assembly, dimer of alpha and beta chains. A typical microtubule is a hollow water-filled tube with an outer diameter of 25 nm and an inner diameter of 15 nM. Alpha-beta heterodimers associate head-to-tail to form protofilaments running lengthwise along the microtubule wall with the beta-tubulin subunit facing the microtubule plus end conferring a structural polarity. Microtubules usually have 13 protofilaments but different protofilament numbers can be found in some organisms and specialized cells. Mg(2+) is required as a cofactor.

The protein resides in the cytoplasm. Its subcellular location is the cytoskeleton. In terms of biological role, tubulin is the major constituent of microtubules, a cylinder consisting of laterally associated linear protofilaments composed of alpha- and beta-tubulin heterodimers. Microtubules grow by the addition of GTP-tubulin dimers to the microtubule end, where a stabilizing cap forms. Below the cap, tubulin dimers are in GDP-bound state, owing to GTPase activity of alpha-tubulin. This Encephalitozoon intestinalis (Microsporidian parasite) protein is Tubulin beta chain (TUB2).